The sequence spans 207 residues: Large ribosomal subunit protein uL3 (207 aa).

The protein belongs to the universal ribosomal protein uL3 family. In terms of assembly, part of the 50S ribosomal subunit. Forms a cluster with proteins L14 and L19.

Functionally, one of the primary rRNA binding proteins, it binds directly near the 3'-end of the 23S rRNA, where it nucleates assembly of the 50S subunit. In Fervidobacterium nodosum (strain ATCC 35602 / DSM 5306 / Rt17-B1), this protein is Large ribosomal subunit protein uL3.